Reading from the N-terminus, the 399-residue chain is Tyrosine--tRNA ligase (399 aa).

The short motif at P42–H51 is the 'HIGH' region element. Residues K226–S230 carry the 'KMSKS' region motif. Position 229 (K229) interacts with ATP. The S4 RNA-binding domain occupies L337–V398.

The protein belongs to the class-I aminoacyl-tRNA synthetase family. TyrS type 2 subfamily. Homodimer.

The protein resides in the cytoplasm. The enzyme catalyses tRNA(Tyr) + L-tyrosine + ATP = L-tyrosyl-tRNA(Tyr) + AMP + diphosphate + H(+). Functionally, catalyzes the attachment of tyrosine to tRNA(Tyr) in a two-step reaction: tyrosine is first activated by ATP to form Tyr-AMP and then transferred to the acceptor end of tRNA(Tyr). The sequence is that of Tyrosine--tRNA ligase from Coxiella burnetii (strain RSA 493 / Nine Mile phase I).